We begin with the raw amino-acid sequence, 569 residues long: Dihydroxy-acid dehydratase (569 aa).

Cys61 serves as a coordination point for [2Fe-2S] cluster. Asp93 provides a ligand contact to Mg(2+). Position 134 (Cys134) interacts with [2Fe-2S] cluster. Asp135 and Lys136 together coordinate Mg(2+). Lys136 is subject to N6-carboxylysine. Cys211 contacts [2Fe-2S] cluster. Glu462 provides a ligand contact to Mg(2+). Ser488 acts as the Proton acceptor in catalysis.

It belongs to the IlvD/Edd family. As to quaternary structure, homodimer. [2Fe-2S] cluster is required as a cofactor. The cofactor is Mg(2+).

The catalysed reaction is (2R)-2,3-dihydroxy-3-methylbutanoate = 3-methyl-2-oxobutanoate + H2O. It catalyses the reaction (2R,3R)-2,3-dihydroxy-3-methylpentanoate = (S)-3-methyl-2-oxopentanoate + H2O. Its pathway is amino-acid biosynthesis; L-isoleucine biosynthesis; L-isoleucine from 2-oxobutanoate: step 3/4. It participates in amino-acid biosynthesis; L-valine biosynthesis; L-valine from pyruvate: step 3/4. Functionally, functions in the biosynthesis of branched-chain amino acids. Catalyzes the dehydration of (2R,3R)-2,3-dihydroxy-3-methylpentanoate (2,3-dihydroxy-3-methylvalerate) into 2-oxo-3-methylpentanoate (2-oxo-3-methylvalerate) and of (2R)-2,3-dihydroxy-3-methylbutanoate (2,3-dihydroxyisovalerate) into 2-oxo-3-methylbutanoate (2-oxoisovalerate), the penultimate precursor to L-isoleucine and L-valine, respectively. In Tropheryma whipplei (strain Twist) (Whipple's bacillus), this protein is Dihydroxy-acid dehydratase.